A 412-amino-acid polypeptide reads, in one-letter code: Maintenance of mitochondrial morphology protein 1 (412 aa).

The Lumenal segment spans residues 1–81; the sequence is MTKELIKTEA…PANNWTFTQG (81 aa). The chain crosses the membrane as a helical span at residues 82 to 102; the sequence is LVLGQISVIFIIIVFVKFFVF. The Cytoplasmic segment spans residues 103–412; that stretch reads ADSSTIPTKK…RSDSGTSENL (310 aa). One can recognise an SMP-LTD domain in the interval 165–382; the sequence is SPESLDWFNV…EPRFQVVRLP (218 aa). The interval 389–412 is disordered; that stretch reads KNTREPINKKTSVSRSDSGTSENL. Residues 397 to 412 show a composition bias toward polar residues; that stretch reads KKTSVSRSDSGTSENL.

This sequence belongs to the MMM1 family. As to quaternary structure, homodimer. Component of the ER-mitochondria encounter structure (ERMES) or MDM complex, composed of MMM1, MDM10, MDM12 and MDM34. An MMM1 homodimer associates with one molecule of MDM12 on each side in a pairwise head-to-tail manner, and the SMP-LTD domains of MMM1 and MDM12 generate a continuous hydrophobic tunnel for phospholipid trafficking.

It is found in the endoplasmic reticulum membrane. In terms of biological role, component of the ERMES/MDM complex, which serves as a molecular tether to connect the endoplasmic reticulum (ER) and mitochondria. Components of this complex are involved in the control of mitochondrial shape and protein biogenesis, and function in nonvesicular lipid trafficking between the ER and mitochondria. The MDM12-MMM1 subcomplex functions in the major beta-barrel assembly pathway that is responsible for biogenesis of all outer membrane beta-barrel proteins, and acts in a late step after the SAM complex. The MDM10-MDM12-MMM1 subcomplex further acts in the TOM40-specific pathway after the action of the MDM12-MMM1 complex. Essential for establishing and maintaining the structure of mitochondria and maintenance of mtDNA nucleoids. The protein is Maintenance of mitochondrial morphology protein 1 of Candida tropicalis (strain ATCC MYA-3404 / T1) (Yeast).